The sequence spans 405 residues: Dynactin subunit 2 (405 aa).

Residues 1 to 24 (MADPKYADLPGIARNEPDVYETSD) are disordered. Residues 101–134 (PQQKYQRLLHEIQELTQEVEKAQSTVKESAAEEK) adopt a coiled-coil conformation. Residues 186-207 (AKTRKNPEGKSPAKGPGPDNEN) form a disordered region. Residues 383 to 403 (KENLATVEDNFTSIDARIKKL) are a coiled coil.

The protein belongs to the dynactin subunit 2 family. As to quaternary structure, subunit of dynactin, a multiprotein complex part of a tripartite complex with dynein and a adapter, such as BICDL1, BICD2 or HOOK3. The dynactin complex is built around ACTR1A/ACTB filament and consists of an actin-related filament composed of a shoulder domain, a pointed end and a barbed end. Its length is defined by its flexible shoulder domain. The soulder is composed of 2 DCTN1 subunits, 4 DCTN2 and 2 DCTN3.

The protein resides in the cytoplasm. It is found in the cytoskeleton. The protein localises to the microtubule organizing center. Its subcellular location is the centrosome. It localises to the membrane. Its function is as follows. Part of the dynactin complex that activates the molecular motor dynein for ultra-processive transport along microtubules. In the dynactin soulder domain, binds the ACTR1A filament and acts as a molecular ruler to determine the length. Modulates cytoplasmic dynein binding to an organelle, and plays a role in prometaphase chromosome alignment and spindle organization during mitosis. Involved in anchoring microtubules to centrosomes. The protein is Dynactin subunit 2 (dctn2) of Xenopus tropicalis (Western clawed frog).